The following is a 231-amino-acid chain: Small ribosomal subunit protein uS3 (231 aa).

Positions 39-107 (IRKFLKAKLY…DVTINIKEER (69 aa)) constitute a KH type-2 domain.

Belongs to the universal ribosomal protein uS3 family. As to quaternary structure, part of the 30S ribosomal subunit. Forms a tight complex with proteins S10 and S14.

Binds the lower part of the 30S subunit head. Binds mRNA in the 70S ribosome, positioning it for translation. The sequence is that of Small ribosomal subunit protein uS3 from Campylobacter hominis (strain ATCC BAA-381 / DSM 21671 / CCUG 45161 / LMG 19568 / NCTC 13146 / CH001A).